A 603-amino-acid polypeptide reads, in one-letter code: Putative ankyrin repeat protein FPV162 (603 aa).

14 ANK repeats span residues 23-53, 57-87, 91-120, 124-155, 159-189, 193-223, 227-257, 261-291, 295-325, 329-362, 366-397, 401-428, 432-467, and 504-533; these read FKDT…DINV, FKKT…NVNV, FEST…DPNT, NGQT…NVNA, KHNT…DVKI, DGIT…DVNA, EGNT…EVNA, VGDT…NVNA, ISVT…EVNS, YGRT…DIEA, IGGT…DINT, RDET…STNI, SNIT…DIKN, and NNMY…DIYL.

This chain is Putative ankyrin repeat protein FPV162, found in Vertebrata (FPV).